Consider the following 1003-residue polypeptide: Pumilio homolog 4 (1003 aa).

The disordered stretch occupies residues 38 to 65 (QHRNQQSFGRERERDIDVHRSGSAPPTV). A compositionally biased stretch (basic and acidic residues) spans 46 to 57 (GRERERDIDVHR). S225 carries the post-translational modification Phosphoserine. Residues 285 to 300 (KNSPNTMLGSTMSSPV) are compositionally biased toward polar residues. The interval 285–328 (KNSPNTMLGSTMSSPVPRNRTPDSHLVGRSTASGLPPIGTRVGP) is disordered. T305 is modified (phosphothreonine). One can recognise a PUM-HD domain in the interval 644-984 (AEASLLEGFK…HIVARVEKLI (341 aa)). 8 Pumilio repeats span residues 664 to 699 (EIVG…AIFP), 700 to 735 (EILP…ELAE), 736 to 771 (QVTG…RMVK), 772 to 807 (ELDG…FIIS), 808 to 843 (SFYG…RIIM), 845 to 880 (EIMD…EIIN), 881 to 916 (KLAG…VLVN), and 917 to 958 (EMLG…LILS).

The protein localises to the cytoplasm. In terms of biological role, sequence-specific RNA-binding protein that regulates translation and mRNA stability by binding the 3'-UTR of target mRNAs. Binds the APUM-binding elements (APBEs) in the 3'-UTR mRNA sequence of CLV1, PNH, WUS and FAS2. The sequence is that of Pumilio homolog 4 (APUM4) from Arabidopsis thaliana (Mouse-ear cress).